The chain runs to 991 residues: Ribonuclease TUDOR 1 (991 aa).

N-acetylalanine is present on Ala-2. 4 TNase-like domains span residues 8 to 151 (QWLK…RWSK), 186 to 364 (KPME…MWAN), 378 to 557 (QNFT…IHSA), and 587 to 714 (RRIP…IWEN). The interval 227–250 (RTTNGSVVETVPDEPNGDVSAESR) is disordered. A Tudor domain is found at 782–847 (NPKRGDIVLA…RPIDPSVSAA (66 aa)). Phosphotyrosine is present on Tyr-970. The interval 971-991 (GDIESDDEDTGPARKPAGGRR) is disordered. Position 975 is a phosphoserine (Ser-975). Thr-980 is modified (phosphothreonine).

Expressed in seeds, leaves, flowers, roots and siliques (at protein level). Accumulates in the cap and elongation zone of the root apices (at protein level).

It localises to the cytoplasm. The protein resides in the cytoplasmic granule. The protein localises to the perinuclear region. It is found in the endoplasmic reticulum. Repressed by the specific inhibitor 3',5'-deoxythymidine bisphosphate (pdTp); this RNase activity inhibition impairs subcellular relocation upon abiotic stress and leads to reduced stress resistance. Functionally, cytoprotective ribonuclease (RNase) required for resistance to abiotic stresses, acting as a positive regulator of mRNA decapping during stress. Essential for the integrity and function of cytoplasmic messenger ribonucleoprotein (mRNP) complexes called stress granules (SGs) and processing bodies (PBs), sites of post-transcriptional gene regulation during stress (e.g. salt and heat). Involved in gibberellic acid (GA) biosynthesis. Essential for stress tolerance, probably by regulating mRNAs entering the secretory pathway. Component of stress granules (SGs) that regulates growth under salt stress by modulating levels of GA20OX3 mRNA. Binds GA20OX3 mRNA. May inhibit the degradation of mRNAs involved in stress adaptation. This Arabidopsis thaliana (Mouse-ear cress) protein is Ribonuclease TUDOR 1.